Consider the following 330-residue polypeptide: Probable deoxyhypusine synthase (330 aa).

The active-site Nucleophile is lysine 303.

This sequence belongs to the deoxyhypusine synthase family. NAD(+) is required as a cofactor.

The enzyme catalyses [eIF5A protein]-L-lysine + spermidine = [eIF5A protein]-deoxyhypusine + propane-1,3-diamine. Its pathway is protein modification; eIF5A hypusination. Its function is as follows. Catalyzes the NAD-dependent oxidative cleavage of spermidine and the subsequent transfer of the butylamine moiety of spermidine to the epsilon-amino group of a specific lysine residue of the eIF-5A precursor protein to form the intermediate deoxyhypusine residue. The sequence is that of Probable deoxyhypusine synthase (dys) from Methanocaldococcus jannaschii (strain ATCC 43067 / DSM 2661 / JAL-1 / JCM 10045 / NBRC 100440) (Methanococcus jannaschii).